Reading from the N-terminus, the 270-residue chain is MRASSKKKVLVFDSGVGGLSVFQEIHQLLPHLDYFYLFDNEAYPYGELDQNVLISRVNQLVSALVAEHHIDIVVIACNTASTIVLPSLRDNLSVPVVGVVPAIKPASLLATQGVGLIATPATVTRQYTHELIRDFAQGKPVELLGSTRLVDMAEEKLRGESVPLDELKSILSPLCNKVDVAVLGCTHFPLIKNEIQQVLGSNVVLIDSGEAIARRVKALLSCGELEEKEEGIKRIFASAPPWQEDALNICLAKLGFNPVQIYRHLGVSDR.

Residues 13–14 and 45–46 each bind substrate; these read DS and YG. Cys-77 functions as the Proton donor/acceptor in the catalytic mechanism. Residue 78–79 participates in substrate binding; that stretch reads NT. The active-site Proton donor/acceptor is the Cys-185. Residue 186-187 coordinates substrate; that stretch reads TH.

It belongs to the aspartate/glutamate racemases family.

The catalysed reaction is L-glutamate = D-glutamate. The protein operates within cell wall biogenesis; peptidoglycan biosynthesis. Functionally, provides the (R)-glutamate required for cell wall biosynthesis. In Vibrio parahaemolyticus serotype O3:K6 (strain RIMD 2210633), this protein is Glutamate racemase.